A 152-amino-acid polypeptide reads, in one-letter code: Cell division protein SepF (152 aa).

A disordered region spans residues 25–54 (EEREPVQEEKGTKDKAAFQERPQTGKQNVV). Residues 28-42 (EPVQEEKGTKDKAAF) are compositionally biased toward basic and acidic residues.

This sequence belongs to the SepF family. As to quaternary structure, homodimer. Interacts with FtsZ.

It is found in the cytoplasm. Its function is as follows. Cell division protein that is part of the divisome complex and is recruited early to the Z-ring. Probably stimulates Z-ring formation, perhaps through the cross-linking of FtsZ protofilaments. Its function overlaps with FtsA. The chain is Cell division protein SepF from Bacillus pumilus (strain SAFR-032).